A 437-amino-acid polypeptide reads, in one-letter code: GTPase Der (437 aa).

EngA-type G domains are found at residues 4-167 (PVVA…AEKD) and 175-352 (IRFS…DHQH). Residues 10 to 17 (GRPNVGKS), 57 to 61 (DTGGI), 119 to 122 (NKVD), 181 to 188 (GRPNVGKS), 229 to 233 (DTAGI), and 294 to 297 (NKWD) each bind GTP. Positions 353-437 (RRIQSAVLND…PIRLIKRRRK (85 aa)) constitute a KH-like domain.

This sequence belongs to the TRAFAC class TrmE-Era-EngA-EngB-Septin-like GTPase superfamily. EngA (Der) GTPase family. Associates with the 50S ribosomal subunit.

Functionally, GTPase that plays an essential role in the late steps of ribosome biogenesis. In Limosilactobacillus fermentum (strain NBRC 3956 / LMG 18251) (Lactobacillus fermentum), this protein is GTPase Der.